The sequence spans 367 residues: Cystinosin (367 aa).

An N-terminal signal peptide occupies residues 1 to 22 (MIRRWLVIFILFPLQLIEKCES). Over 23–125 (TVDFSVPPIV…LVIHSNIVSI (103 aa)) the chain is Lumenal. N-linked (GlcNAc...) asparagine glycosylation is found at Asn-51, Asn-66, Asn-84, Asn-104, and Asn-107. The PQ-loop 1 domain occupies 123–189 (VSIINQVIGW…LFWVPSIKEQ (67 aa)). Residues 126-150 (INQVIGWIYFVAWSVSFYPQVITNW) traverse the membrane as a helical segment. Residues 151–159 (RRKSVVGLS) are Cytoplasmic-facing. The chain crosses the membrane as a helical span at residues 160–179 (FDFVVLNLMGFVAYSVFNIG). Asn-166 contacts L-cystine. Residues 180–202 (LFWVPSIKEQFLLKYPNGVNPVD) lie on the Lumenal side of the membrane. The chain crosses the membrane as a helical span at residues 203 to 225 (SNDVFFSLHAVALTLVVIVQCLL). Residue Asp-205 coordinates H(+). The Cytoplasmic portion of the chain corresponds to 226-234 (YERGSQRVS). Residues 235 to 257 (WLAISFLVLSWLFTLIALIMAAV) traverse the membrane as a helical segment. At 258–263 (GATTWL) the chain is on the lumenal side. The 66-residue stretch at 263 to 328 (LQFLFCFSYI…QSYNNDQWTL (66 aa)) folds into the PQ-loop 2 domain. A helical transmembrane segment spans residues 264 to 289 (QFLFCFSYIKLAVTLVKYFPQAYMNF). Positions 273, 280, and 281 each coordinate L-cystine. At 290–298 (HYKSTEGWS) the chain is on the cytoplasmic side. Residues 299–308 (IGNVLLDFTG) traverse the membrane as a helical segment. L-cystine contacts are provided by Asn-301 and Asp-305. Asp-305 contributes to the H(+) binding site. The Lumenal portion of the chain corresponds to 309–331 (GSFSLLQMFLQSYNNDQWTLIFG). Residues 332–354 (DPTKFGLGIFSIIFDVVFFIQHF) form a helical membrane-spanning segment. Asp-346 is a binding site for H(+). Topologically, residues 355-367 (CLYRKKPGYDQLN) are cytoplasmic. The Lysosomal targeting motif signature appears at 362–366 (GYDQL).

The protein belongs to the cystinosin family. Interacts with components of the V-ATPase complex. Interacts with components of the Ragulator complex. Interacts with RRAGA/RagA and RRAGC/RagC. Interacts with AP-3 complex subunit mu (AP3M1 or AP3M2).

It localises to the lysosome membrane. The protein resides in the melanosome membrane. The catalysed reaction is L-cystine(out) + H(+)(out) = L-cystine(in) + H(+)(in). With respect to regulation, switches between a lumen- and a cytosol-open conformation: pH induces conformational changes and shifts the equilibrium to facilitate the transition between the lumen- and cytosol-open conformation, thereby promoting cystine transport. Protonation of specific aspartate residues (Asp-205, Asp-305 and Asp-346) favors the cytosol-open conformation. In terms of biological role, cystine/H(+) symporter that mediates export of cystine, the oxidized dimer of cysteine, from lysosomes. Plays an important role in melanin synthesis by catalyzing cystine export from melanosomes, possibly by inhibiting pheomelanin synthesis. In addition to cystine export, also acts as a positive regulator of mTORC1 signaling in kidney proximal tubular cells, via interactions with components of the v-ATPase and Ragulator complexes. Also involved in small GTPase-regulated vesicle trafficking and lysosomal localization of LAMP2A, independently of cystine transporter activity. The sequence is that of Cystinosin from Bos taurus (Bovine).